Reading from the N-terminus, the 273-residue chain is 4-hydroxy-tetrahydrodipicolinate reductase (273 aa).

Position 12-17 (12-17) interacts with NAD(+); it reads GAMGRM. Lysine 39 is a binding site for NADP(+). NAD(+)-binding positions include 102-104 and 126-129; these read GTT and ASNF. Histidine 159 acts as the Proton donor/acceptor in catalysis. Histidine 160 is a binding site for (S)-2,3,4,5-tetrahydrodipicolinate. Lysine 163 acts as the Proton donor in catalysis. 169–170 is a (S)-2,3,4,5-tetrahydrodipicolinate binding site; that stretch reads GT.

This sequence belongs to the DapB family. Homotetramer.

The protein resides in the cytoplasm. It carries out the reaction (S)-2,3,4,5-tetrahydrodipicolinate + NAD(+) + H2O = (2S,4S)-4-hydroxy-2,3,4,5-tetrahydrodipicolinate + NADH + H(+). It catalyses the reaction (S)-2,3,4,5-tetrahydrodipicolinate + NADP(+) + H2O = (2S,4S)-4-hydroxy-2,3,4,5-tetrahydrodipicolinate + NADPH + H(+). It functions in the pathway amino-acid biosynthesis; L-lysine biosynthesis via DAP pathway; (S)-tetrahydrodipicolinate from L-aspartate: step 4/4. Its function is as follows. Catalyzes the conversion of 4-hydroxy-tetrahydrodipicolinate (HTPA) to tetrahydrodipicolinate. This Buchnera aphidicola subsp. Schizaphis graminum (strain Sg) protein is 4-hydroxy-tetrahydrodipicolinate reductase.